A 244-amino-acid polypeptide reads, in one-letter code: 1-(5-phosphoribosyl)-5-[(5-phosphoribosylamino)methylideneamino] imidazole-4-carboxamide isomerase (244 aa).

Catalysis depends on aspartate 8, which acts as the Proton acceptor. Aspartate 131 serves as the catalytic Proton donor.

It belongs to the HisA/HisF family.

Its subcellular location is the cytoplasm. The enzyme catalyses 1-(5-phospho-beta-D-ribosyl)-5-[(5-phospho-beta-D-ribosylamino)methylideneamino]imidazole-4-carboxamide = 5-[(5-phospho-1-deoxy-D-ribulos-1-ylimino)methylamino]-1-(5-phospho-beta-D-ribosyl)imidazole-4-carboxamide. The protein operates within amino-acid biosynthesis; L-histidine biosynthesis; L-histidine from 5-phospho-alpha-D-ribose 1-diphosphate: step 4/9. This is 1-(5-phosphoribosyl)-5-[(5-phosphoribosylamino)methylideneamino] imidazole-4-carboxamide isomerase from Thermomicrobium roseum (strain ATCC 27502 / DSM 5159 / P-2).